We begin with the raw amino-acid sequence, 309 residues long: Lipoyl synthase (309 aa).

[4Fe-4S] cluster is bound by residues Cys43, Cys48, Cys54, Cys70, Cys74, Cys77, and Ser283. The Radical SAM core domain maps to 56–272 (AVRKTATFMI…KEIAMQKGFS (217 aa)).

It belongs to the radical SAM superfamily. Lipoyl synthase family. The cofactor is [4Fe-4S] cluster.

It localises to the cytoplasm. The catalysed reaction is [[Fe-S] cluster scaffold protein carrying a second [4Fe-4S](2+) cluster] + N(6)-octanoyl-L-lysyl-[protein] + 2 oxidized [2Fe-2S]-[ferredoxin] + 2 S-adenosyl-L-methionine + 4 H(+) = [[Fe-S] cluster scaffold protein] + N(6)-[(R)-dihydrolipoyl]-L-lysyl-[protein] + 4 Fe(3+) + 2 hydrogen sulfide + 2 5'-deoxyadenosine + 2 L-methionine + 2 reduced [2Fe-2S]-[ferredoxin]. It participates in protein modification; protein lipoylation via endogenous pathway; protein N(6)-(lipoyl)lysine from octanoyl-[acyl-carrier-protein]. In terms of biological role, catalyzes the radical-mediated insertion of two sulfur atoms into the C-6 and C-8 positions of the octanoyl moiety bound to the lipoyl domains of lipoate-dependent enzymes, thereby converting the octanoylated domains into lipoylated derivatives. This Shouchella clausii (strain KSM-K16) (Alkalihalobacillus clausii) protein is Lipoyl synthase.